A 575-amino-acid chain; its full sequence is MDFPTISRSPSGPPAMDLEGPRDILVPSEDLTPDSQWDPMPGGPGSLSRMELDESSLQELVQQFEALPGDLVGPSPGGAPCPLHIATGHGLASQEIADAHGLLSAEAGRDDLLGLLHCEECPPSQTGPEEPLEPAPRLLQPPEDPDEDSDSPEWVEGASAEQEGSRSSSSSPEPWLETVPLVTPEEPPAGAQSPETLASYPAPQEVPGPCDHEDLLDGVIFGARYLGSTQLVSERNPPTSTRMAQAREAMDRVKAPDGETQPMTEVDLFVSTKRIKVLTADSQEAMMDHALHTISYTADIGCVLVLMARRRLARRPAPQDHGRRLYKMLCHVFYAEDAQLIAQAIGQAFAAAYSQFLRESGIDPSQVGVHPSPGACHLHNGDLDHFSNSDNCREVHLEKRRGEGLGVALVESGWGSLLPTAVIANLLHGGPAERSGALSIGDRLTAINGTSLVGLPLAACQAAVRETKSQTSVTLSIVHCPPVTTAIIHRPHAREQLGFCVEDGIICSLLRGGIAERGGIRVGHRIIEINGQSVVATPHARIIELLTEAYGEVHIKTMPAATYRLLTGQEQPVYL.

Met1 is subject to N-acetylmethionine. The span at Met1 to Pro10 shows a compositional bias: polar residues. Disordered regions lie at residues Met1–Met50 and Cys118–Asp211. Ser11 is modified (phosphoserine). A compositionally biased stretch (acidic residues) spans Glu143 to Glu153. The segment covering Glu156–Pro184 has biased composition (low complexity). Ser171 bears the Phosphoserine mark. Residues Leu215–Pro364 form a required for interaction with NECAB3 region. The PID domain maps to Asp217–Gly381. Position 372 is a phosphoserine (Ser372). 2 PDZ domains span residues Glu394 to Cys480 and Thr485 to Ala560.

As to quaternary structure, binds to the cytoplasmic domain of amyloid protein (APP) in vivo. Interacts with HIF1AN (via N-terminus). Interacts with NECAB3; seems to mediate the interaction between NECAB3 and HIF1AN. Expressed in all tissues examined with lower levels in brain and testis.

Its subcellular location is the cytoplasm. The protein localises to the perinuclear region. Its function is as follows. May modulate processing of the amyloid-beta precursor protein (APP) and hence formation of APP-beta. May enhance the activity of HIF1A in macrophages by inhibiting the activity of HIF1AN. The chain is Amyloid-beta A4 precursor protein-binding family A member 3 (APBA3) from Homo sapiens (Human).